The sequence spans 465 residues: UDP-N-acetylmuramate--L-alanine ligase (465 aa).

112-118 (GTHGKTT) contacts ATP.

Belongs to the MurCDEF family.

It is found in the cytoplasm. It catalyses the reaction UDP-N-acetyl-alpha-D-muramate + L-alanine + ATP = UDP-N-acetyl-alpha-D-muramoyl-L-alanine + ADP + phosphate + H(+). It functions in the pathway cell wall biogenesis; peptidoglycan biosynthesis. In terms of biological role, cell wall formation. This is UDP-N-acetylmuramate--L-alanine ligase from Burkholderia cenocepacia (strain ATCC BAA-245 / DSM 16553 / LMG 16656 / NCTC 13227 / J2315 / CF5610) (Burkholderia cepacia (strain J2315)).